Here is a 274-residue protein sequence, read N- to C-terminus: 2,3,4,5-tetrahydropyridine-2,6-dicarboxylate N-succinyltransferase (274 aa).

Residues Arg104 and Asp141 each coordinate substrate.

It belongs to the transferase hexapeptide repeat family. As to quaternary structure, homotrimer.

It localises to the cytoplasm. It catalyses the reaction (S)-2,3,4,5-tetrahydrodipicolinate + succinyl-CoA + H2O = (S)-2-succinylamino-6-oxoheptanedioate + CoA. It participates in amino-acid biosynthesis; L-lysine biosynthesis via DAP pathway; LL-2,6-diaminopimelate from (S)-tetrahydrodipicolinate (succinylase route): step 1/3. The chain is 2,3,4,5-tetrahydropyridine-2,6-dicarboxylate N-succinyltransferase from Shewanella baltica (strain OS155 / ATCC BAA-1091).